A 370-amino-acid polypeptide reads, in one-letter code: Ganglioside-induced differentiation-associated protein 1-like 1 (370 aa).

In terms of domain architecture, GST N-terminal spans 45–129 (ESLVLYHWTQ…YVERTFTGEH (85 aa)). In terms of domain architecture, GST C-terminal spans 177–344 (PKYATAEIRR…RLVKRKPPSF (168 aa)).

This sequence belongs to the GST superfamily.

The sequence is that of Ganglioside-induced differentiation-associated protein 1-like 1 (Gdap1l1) from Mus musculus (Mouse).